We begin with the raw amino-acid sequence, 101 residues long: Protein S100-A7A (101 aa).

EF-hand domains lie at 13 to 48 (MIDM…SACD) and 50 to 85 (KGIH…IAAD). Zn(2+) contacts are provided by His-18, Glu-28, and Glu-38. Ca(2+) is bound by residues Asp-63 and Asn-65. Zn(2+) is bound at residue Glu-66. The Ca(2+) site is built by Asp-67, Lys-69, and Glu-74. The Zn(2+) site is built by His-87 and His-91.

This sequence belongs to the S-100 family. As to expression, overexpressed in psoriasis.

It is found in the cytoplasm. Its function is as follows. May be involved in epidermal differentiation and inflammation and might therefore be important for the pathogenesis of psoriasis and other diseases. This Homo sapiens (Human) protein is Protein S100-A7A (S100A7A).